A 118-amino-acid polypeptide reads, in one-letter code: uncharacterized protein (118 aa).

The interval 49 to 80 (SKEEHTTSAANLHPRKKKRMPPRRAEKNKAPN) is disordered. The span at 61–70 (HPRKKKRMPP) shows a compositional bias: basic residues.

This is an uncharacterized protein from Saccharomyces cerevisiae (strain ATCC 204508 / S288c) (Baker's yeast).